The chain runs to 443 residues: Mitochondrial enolase superfamily member 1 (443 aa).

Substrate-binding positions include 24–26 and Y34; that span reads GSD. A Phosphoserine modification is found at S148. K220 is a substrate binding site. K222 (proton donor/acceptor) is an active-site residue. Mg(2+) is bound at residue D250. Residues N252, E276, E305, 355–357, and E386 contribute to the substrate site; that span reads HAG. E276 and E305 together coordinate Mg(2+). H355 is an active-site residue.

This sequence belongs to the mandelate racemase/muconate lactonizing enzyme family. ENOSF1 subfamily. It depends on Mg(2+) as a cofactor. Post-translationally, could be sumoylated.

The protein localises to the mitochondrion. It catalyses the reaction L-fuconate = 2-dehydro-3-deoxy-L-fuconate + H2O. Plays a role in the catabolism of L-fucose, a sugar that is part of the carbohydrates that are attached to cellular glycoproteins. Catalyzes the dehydration of L-fuconate to 2-keto-3-deoxy-L-fuconate by the abstraction of the 2-proton to generate an enediolate intermediate that is stabilized by the magnesium ion. May down-regulate thymidylate synthase activity, possibly already at the RNA level, by promoting the degradation of TYMS mRNA via an antisense RNA-based mechanism. This is Mitochondrial enolase superfamily member 1 (ENOSF1) from Bos taurus (Bovine).